The sequence spans 172 residues: Translation initiation factor IF-3 (172 aa).

It belongs to the IF-3 family. In terms of assembly, monomer.

It localises to the cytoplasm. Functionally, IF-3 binds to the 30S ribosomal subunit and shifts the equilibrium between 70S ribosomes and their 50S and 30S subunits in favor of the free subunits, thus enhancing the availability of 30S subunits on which protein synthesis initiation begins. This chain is Translation initiation factor IF-3, found in Campylobacter concisus (strain 13826).